Here is a 645-residue protein sequence, read N- to C-terminus: ATP-dependent zinc metalloprotease FtsH 1 (645 aa).

Topologically, residues methionine 1–lysine 6 are cytoplasmic. The chain crosses the membrane as a helical span at residues threonine 7–serine 27. The Periplasmic portion of the chain corresponds to lysine 28 to phenylalanine 110. Residues phenylalanine 111–isoleucine 131 traverse the membrane as a helical segment. Residues methionine 132–isoleucine 645 are Cytoplasmic-facing. Glycine 203 to threonine 210 is a binding site for ATP. Histidine 425 provides a ligand contact to Zn(2+). Glutamate 426 is a catalytic residue. Zn(2+) is bound by residues histidine 429 and aspartate 501.

This sequence in the central section; belongs to the AAA ATPase family. The protein in the C-terminal section; belongs to the peptidase M41 family. As to quaternary structure, homohexamer. Zn(2+) is required as a cofactor.

Its subcellular location is the cell inner membrane. Its function is as follows. Acts as a processive, ATP-dependent zinc metallopeptidase for both cytoplasmic and membrane proteins. Plays a role in the quality control of integral membrane proteins. This Bdellovibrio bacteriovorus (strain ATCC 15356 / DSM 50701 / NCIMB 9529 / HD100) protein is ATP-dependent zinc metalloprotease FtsH 1.